The primary structure comprises 159 residues: 3-hydroxyacyl-[acyl-carrier-protein] dehydratase FabZ (159 aa).

His-59 is a catalytic residue.

This sequence belongs to the thioester dehydratase family. FabZ subfamily.

It localises to the cytoplasm. It catalyses the reaction a (3R)-hydroxyacyl-[ACP] = a (2E)-enoyl-[ACP] + H2O. Functionally, involved in unsaturated fatty acids biosynthesis. Catalyzes the dehydration of short chain beta-hydroxyacyl-ACPs and long chain saturated and unsaturated beta-hydroxyacyl-ACPs. This chain is 3-hydroxyacyl-[acyl-carrier-protein] dehydratase FabZ, found in Caulobacter vibrioides (strain ATCC 19089 / CIP 103742 / CB 15) (Caulobacter crescentus).